The chain runs to 155 residues: Small ribosomal subunit protein bS6 (155 aa).

Residues 94–155 are disordered; sequence EKHEEGPSAM…RPRRPREDRV (62 aa).

It belongs to the bacterial ribosomal protein bS6 family.

In terms of biological role, binds together with bS18 to 16S ribosomal RNA. The polypeptide is Small ribosomal subunit protein bS6 (Rhizobium leguminosarum bv. trifolii (strain WSM2304)).